Consider the following 442-residue polypeptide: UDP-N-acetylmuramate--L-alanine ligase (442 aa).

Gly109–Ser115 provides a ligand contact to ATP.

Belongs to the MurCDEF family.

It localises to the cytoplasm. The catalysed reaction is UDP-N-acetyl-alpha-D-muramate + L-alanine + ATP = UDP-N-acetyl-alpha-D-muramoyl-L-alanine + ADP + phosphate + H(+). Its pathway is cell wall biogenesis; peptidoglycan biosynthesis. Functionally, cell wall formation. This chain is UDP-N-acetylmuramate--L-alanine ligase, found in Streptococcus pyogenes serotype M3 (strain SSI-1).